Consider the following 198-residue polypeptide: Glycerol-3-phosphate acyltransferase (198 aa).

5 helical membrane passes run Leu-5–Gly-25, Ser-56–Phe-76, Phe-84–Phe-104, Ala-114–Val-134, and Leu-158–Trp-178.

It belongs to the PlsY family. As to quaternary structure, probably interacts with PlsX.

The protein resides in the cell membrane. It carries out the reaction an acyl phosphate + sn-glycerol 3-phosphate = a 1-acyl-sn-glycero-3-phosphate + phosphate. It participates in lipid metabolism; phospholipid metabolism. In terms of biological role, catalyzes the transfer of an acyl group from acyl-phosphate (acyl-PO(4)) to glycerol-3-phosphate (G3P) to form lysophosphatidic acid (LPA). This enzyme utilizes acyl-phosphate as fatty acyl donor, but not acyl-CoA or acyl-ACP. The polypeptide is Glycerol-3-phosphate acyltransferase (Listeria monocytogenes serotype 4b (strain CLIP80459)).